The primary structure comprises 186 residues: Putative manganese efflux pump MntP (186 aa).

A run of 6 helical transmembrane segments spans residues 3–23, 39–59, 65–85, 109–129, 133–153, and 166–186; these read PIALLLLAFAMSTDAFAAAIG, IGIIFGSIEAITPLVGWLIGK, VEAWDHWIAFSLLTVLGLHMI, CLTAFSTSIDAMAVGVSLAFI, IWIASALIGLATTLMVTIGIM, and AEIFGGLTLIAVGAWILYGQL.

Belongs to the MntP (TC 9.B.29) family.

It localises to the cell inner membrane. Probably functions as a manganese efflux pump. The protein is Putative manganese efflux pump MntP of Alcanivorax borkumensis (strain ATCC 700651 / DSM 11573 / NCIMB 13689 / SK2).